The sequence spans 187 residues: Elongation factor P (187 aa).

The protein belongs to the elongation factor P family.

It is found in the cytoplasm. It participates in protein biosynthesis; polypeptide chain elongation. In terms of biological role, involved in peptide bond synthesis. Stimulates efficient translation and peptide-bond synthesis on native or reconstituted 70S ribosomes in vitro. Probably functions indirectly by altering the affinity of the ribosome for aminoacyl-tRNA, thus increasing their reactivity as acceptors for peptidyl transferase. This chain is Elongation factor P, found in Helicobacter hepaticus (strain ATCC 51449 / 3B1).